Here is a 553-residue protein sequence, read N- to C-terminus: Membrane protein insertase YidC (553 aa).

Helical transmembrane passes span 7–24, 365–385, 435–455, 474–494, and 509–529; these read VLWVIFFMSAVMLYDNWQ, WGWAIVLLTLLIKAVFFPLSA, LPVVIQIPVFISLYWVLLASV, PYFILPVLMAVSMYVQTSLNP, and PIAFSVMFFFFPAGLVLYYVV.

This sequence belongs to the OXA1/ALB3/YidC family. Type 1 subfamily. Interacts with the Sec translocase complex via SecD. Specifically interacts with transmembrane segments of nascent integral membrane proteins during membrane integration.

The protein resides in the cell inner membrane. Its function is as follows. Required for the insertion and/or proper folding and/or complex formation of integral membrane proteins into the membrane. Involved in integration of membrane proteins that insert both dependently and independently of the Sec translocase complex, as well as at least some lipoproteins. Aids folding of multispanning membrane proteins. The chain is Membrane protein insertase YidC from Burkholderia multivorans (strain ATCC 17616 / 249).